Consider the following 436-residue polypeptide: 3-ketoacyl-CoA thiolase (436 aa).

Cys-99 acts as the Acyl-thioester intermediate in catalysis. Residues His-392 and Cys-422 each act as proton acceptor in the active site.

This sequence belongs to the thiolase-like superfamily. Thiolase family. As to quaternary structure, heterotetramer of two alpha chains (FadJ) and two beta chains (FadI).

The protein resides in the cytoplasm. The enzyme catalyses an acyl-CoA + acetyl-CoA = a 3-oxoacyl-CoA + CoA. It functions in the pathway lipid metabolism; fatty acid beta-oxidation. Catalyzes the final step of fatty acid oxidation in which acetyl-CoA is released and the CoA ester of a fatty acid two carbons shorter is formed. The polypeptide is 3-ketoacyl-CoA thiolase (Salmonella newport (strain SL254)).